A 452-amino-acid chain; its full sequence is Acetyl-CoA decarbonylase/synthase complex subunit delta (452 aa).

It belongs to the CdhD family. In terms of assembly, heterodimer of delta and gamma chains. The ACDS complex is made up of alpha, epsilon, beta, gamma and delta chains with a probable stoichiometry of (alpha(2)epsilon(2))(4)-beta(8)-(gamma(1)delta(1))(8).

Its function is as follows. Part of a complex that catalyzes the reversible cleavage of acetyl-CoA, allowing autotrophic growth from CO(2). Probably maintains the overall quaternary structure of the ACDS complex. This chain is Acetyl-CoA decarbonylase/synthase complex subunit delta, found in Archaeoglobus fulgidus (strain ATCC 49558 / DSM 4304 / JCM 9628 / NBRC 100126 / VC-16).